The chain runs to 402 residues: MKRFISAWNRTSLIKRIAIGVVIGAILGLLIPKITVIGLLGDMFVGGLKAIAPLLVSALVANALSQTREGQQSNMKTVIVLYLFGTFAAALTAVISHYIFPISLKLGAASATKAAAPQGIGEVFKDLMLKMVDNPINALSQANYIGVLVWAVVFGFAMRTASEHTKELLHTLAEVTSQIVRWIINLAPFGILGLVFDTISKNGVGVLADYGVLILVLVGTMTFVALVINPIIAFVMMGKNPFPLVFRCLKDSGITAFFTRSSAANIPVNLQLCEDLGLNPDTYLVSIPLGSTINMAGAAVTINVLTLAAVTTLGIEVDFATAFILSVVSTISACGASGIAGGSLLLVPVACSLFGISNDLAMQVVGVGFIVGVIQDSCETALNSSTDVLFTAVAEKSRWKKS.

8 helical membrane-spanning segments follow: residues 17–37 (IAIGVVIGAILGLLIPKITVI), 44–64 (FVGGLKAIAPLLVSALVANAL), 79–99 (IVLYLFGTFAAALTAVISHYI), 138–158 (ALSQANYIGVLVWAVVFGFAM), 179–199 (IVRWIINLAPFGILGLVFDTI), 212–232 (VLILVLVGTMTFVALVINPII), 295–315 (MAGAAVTINVLTLAAVTTLGI), and 336–356 (ASGIAGGSLLLVPVACSLFGI).

Belongs to the dicarboxylate/amino acid:cation symporter (DAACS) (TC 2.A.23) family.

It is found in the cell membrane. It catalyses the reaction L-serine(in) + Na(+)(in) = L-serine(out) + Na(+)(out). It carries out the reaction L-threonine(in) + Na(+)(in) = L-threonine(out) + Na(+)(out). In terms of biological role, involved in the import of serine and threonine into the cell, with the concomitant import of sodium (symport system). The polypeptide is Serine/threonine transporter SstT (Streptococcus thermophilus (strain ATCC BAA-491 / LMD-9)).